A 381-amino-acid chain; its full sequence is 4-hydroxy-3-methylbut-2-en-1-yl diphosphate synthase (flavodoxin) (381 aa).

The [4Fe-4S] cluster site is built by C280, C283, C315, and E322.

This sequence belongs to the IspG family. The cofactor is [4Fe-4S] cluster.

The enzyme catalyses (2E)-4-hydroxy-3-methylbut-2-enyl diphosphate + oxidized [flavodoxin] + H2O + 2 H(+) = 2-C-methyl-D-erythritol 2,4-cyclic diphosphate + reduced [flavodoxin]. The protein operates within isoprenoid biosynthesis; isopentenyl diphosphate biosynthesis via DXP pathway; isopentenyl diphosphate from 1-deoxy-D-xylulose 5-phosphate: step 5/6. Functionally, converts 2C-methyl-D-erythritol 2,4-cyclodiphosphate (ME-2,4cPP) into 1-hydroxy-2-methyl-2-(E)-butenyl 4-diphosphate. This chain is 4-hydroxy-3-methylbut-2-en-1-yl diphosphate synthase (flavodoxin), found in Clavibacter michiganensis subsp. michiganensis (strain NCPPB 382).